The primary structure comprises 425 residues: Aromatic prenyl transferase PC-22 (425 aa).

L-tryptophan contacts are provided by residues 83–84 and glutamate 92; that span reads GI. Residues arginine 107, lysine 198, tyrosine 200, arginine 265, lysine 267, tyrosine 269, tyrosine 345, tyrosine 410, and tyrosine 414 each contribute to the substrate site.

Belongs to the tryptophan dimethylallyltransferase family. Homodimer.

It participates in secondary metabolite biosynthesis. Aromatic prenyl transferase; part of the gene cluster that mediates the biosynthesis of the indole diterpenes penitrems. The geranylgeranyl diphosphate (GGPP) synthase penG catalyzes the first step in penitrem biosynthesis via conversion of farnesyl pyrophosphate and isopentyl pyrophosphate into geranylgeranyl pyrophosphate (GGPP). Condensation of indole-3-glycerol phosphate with GGPP by the prenyl transferase penC then forms 3-geranylgeranylindole (3-GGI). Epoxidation by the FAD-dependent monooxygenase penM leads to a epoxidized-GGI that is substrate of the terpene cyclase penB for cyclization to yield paspaline. Paspaline is subsequently converted to 13-desoxypaxilline by the cytochrome P450 monooxygenase penP, the latter being then converted to paxilline by the cytochrome P450 monooxygenase penQ. Paxilline is converted to beta-paxitriol via C-10 ketoreduction by the short-chain dehydrogenase PC-15 which can be monoprenylated at the C-20 by the indole diterpene prenyltransferase penD. A two-step elimination (acetylation and elimination) process performed by the O-acetyltransferase PC-16 and the P.simplicissimum ptmI-ortholog not yet identified in P.crustosum, leads to the production of the prenylated form of penijanthine. The FAD-linked oxidoreductase ptmO then converts the prenylated form of penijanthine into PC-M5 which is in turn transformed into PC-M4 by the aromatic dimethylallyltransferase PC-22. A series of oxidation steps involving 4 cytochrome P450 monooxygenases (PC-21, PC-05, PC-23, PC-20) and a FAD-dependent monooxygenase (PC-14) are required for the transformation of PC-M4 to penitrems A and E. Synthesis of these final products is proposed to proceed via penitrems D and C (PC-21, PC-05, PC-14) and penitrems B and F (PC-21, PC-05, PC-14, PC-23). This Penicillium crustosum (Blue mold fungus) protein is Aromatic prenyl transferase PC-22.